We begin with the raw amino-acid sequence, 1848 residues long: Chitin synthase E (1848 aa).

Over residues 1 to 17 the composition is skewed to low complexity; the sequence is MAAPSPAGGAPSHAQSS. Residues 1 to 22 form a disordered region; it reads MAAPSPAGGAPSHAQSSLPSLP. The Myosin motor domain maps to 1–779; that stretch reads MAAPSPAGGA…CWADLAKVGE (779 aa). 102 to 109 provides a ligand contact to ATP; that stretch reads GESGSGKT. The segment at 593–621 is disordered; it reads SSKPLRMPSMARRKTSPSSRLAFDAGDAD. An actin-binding region spans residues 659 to 683; sequence LDIVNKCLSSTNLNPYFIFCLKPND. A run of 2 helical transmembrane segments spans residues 889–909 and 928–948; these read WIALVYLLTFYIPDFAIKLFG and LIIWFSCGVAIFFIVAFPGLV. The Cytochrome b5 heme-binding domain occupies 952–1040; sequence QHVYSAAELS…LLDYRPTNIS (89 aa). N-linked (GlcNAc...) asparagine glycans are attached at residues Asn-1038 and Asn-1063. A helical transmembrane segment spans residues 1200–1220; that stretch reads FILAISVLICSIIVFKFLAAL. Residues Asn-1423, Asn-1457, and Asn-1563 are each glycosylated (N-linked (GlcNAc...) asparagine). The next 3 helical transmembrane spans lie at 1595–1615, 1621–1641, and 1648–1668; these read LSTVIQPVTLAYIIYLIYWLV, IPYTSLILLAAIYGLQALIFI, and MVGWMIVYLLALPVFSLALPL. Residue Asn-1786 is glycosylated (N-linked (GlcNAc...) asparagine). The region spanning 1790 to 1845 is the DEK-C domain; it reads LPSDDAILAEIREILRTADLMSVTKKSIKLELERRFGVNLDLKRPYINSATEAVLA.

The protein in the N-terminal section; belongs to the TRAFAC class myosin-kinesin ATPase superfamily. Myosin family. In the C-terminal section; belongs to the chitin synthase family. Class V subfamily.

The protein resides in the cell membrane. It is found in the cell septum. Its subcellular location is the cell tip. It catalyses the reaction [(1-&gt;4)-N-acetyl-beta-D-glucosaminyl](n) + UDP-N-acetyl-alpha-D-glucosamine = [(1-&gt;4)-N-acetyl-beta-D-glucosaminyl](n+1) + UDP + H(+). Its function is as follows. Polymerizes chitin, a structural polymer of the cell wall and septum, by transferring the sugar moiety of UDP-GlcNAc to the non-reducing end of the growing chitin polymer. Important for hyphal growth and conidiophore development but not pathogenicity. This is Chitin synthase E from Aspergillus fumigatus (strain ATCC MYA-4609 / CBS 101355 / FGSC A1100 / Af293) (Neosartorya fumigata).